The sequence spans 342 residues: S-adenosylmethionine:tRNA ribosyltransferase-isomerase (342 aa).

The protein belongs to the QueA family. As to quaternary structure, monomer.

It is found in the cytoplasm. It catalyses the reaction 7-aminomethyl-7-carbaguanosine(34) in tRNA + S-adenosyl-L-methionine = epoxyqueuosine(34) in tRNA + adenine + L-methionine + 2 H(+). The protein operates within tRNA modification; tRNA-queuosine biosynthesis. Functionally, transfers and isomerizes the ribose moiety from AdoMet to the 7-aminomethyl group of 7-deazaguanine (preQ1-tRNA) to give epoxyqueuosine (oQ-tRNA). The chain is S-adenosylmethionine:tRNA ribosyltransferase-isomerase from Listeria monocytogenes serotype 4a (strain HCC23).